A 426-amino-acid chain; its full sequence is Endoglucanase Z (426 aa).

Residues Met1–Ala43 form the signal peptide. The segment at Ser44 to Tyr332 is catalytic. Catalysis depends on Glu176, which acts as the Proton donor. Glu263 (nucleophile) is an active-site residue. The interval Lys333–Ala366 is linker. Positions Ser336–Asp367 are disordered. The interval Asp367–Asn426 is cellulose-binding. A disulfide bridge links Cys368 with Cys425.

Belongs to the glycosyl hydrolase 5 (cellulase A) family.

It localises to the secreted. It catalyses the reaction Endohydrolysis of (1-&gt;4)-beta-D-glucosidic linkages in cellulose, lichenin and cereal beta-D-glucans.. In terms of biological role, represents 97% of the global cellulase activity. This chain is Endoglucanase Z (celZ), found in Dickeya dadantii (strain 3937) (Erwinia chrysanthemi (strain 3937)).